The chain runs to 621 residues: 1-deoxy-D-xylulose-5-phosphate synthase (621 aa).

Thiamine diphosphate contacts are provided by residues histidine 80 and 121-123 (GHS). Aspartate 152 contacts Mg(2+). Residues 153–154 (GA), asparagine 181, tyrosine 288, and glutamate 371 contribute to the thiamine diphosphate site. Asparagine 181 is a Mg(2+) binding site.

The protein belongs to the transketolase family. DXPS subfamily. In terms of assembly, homodimer. Mg(2+) is required as a cofactor. The cofactor is thiamine diphosphate.

The catalysed reaction is D-glyceraldehyde 3-phosphate + pyruvate + H(+) = 1-deoxy-D-xylulose 5-phosphate + CO2. It participates in metabolic intermediate biosynthesis; 1-deoxy-D-xylulose 5-phosphate biosynthesis; 1-deoxy-D-xylulose 5-phosphate from D-glyceraldehyde 3-phosphate and pyruvate: step 1/1. Its function is as follows. Catalyzes the acyloin condensation reaction between C atoms 2 and 3 of pyruvate and glyceraldehyde 3-phosphate to yield 1-deoxy-D-xylulose-5-phosphate (DXP). The polypeptide is 1-deoxy-D-xylulose-5-phosphate synthase (Pectobacterium atrosepticum (strain SCRI 1043 / ATCC BAA-672) (Erwinia carotovora subsp. atroseptica)).